The chain runs to 445 residues: Probable D-serine dehydratase (445 aa).

At Lys-116 the chain carries N6-(pyridoxal phosphate)lysine.

Belongs to the serine/threonine dehydratase family. DsdA subfamily. Requires pyridoxal 5'-phosphate as cofactor.

It carries out the reaction D-serine = pyruvate + NH4(+). The protein is Probable D-serine dehydratase of Bacillus mycoides (strain KBAB4) (Bacillus weihenstephanensis).